The chain runs to 316 residues: MNKKEPFLATPYLQFNREQWATLRDSVPLTLTKEELIDLKGINEEISLEEVVEIYLPLSRLLNFYISSNLRRQAVLEQFLGTDGQKVPYVIGIAGSVAVGKSTTARLLQALLSRWPEHRSVELITTDGFLHSNSVLNERGLMKKKGFPQSYDMHSLVKFVSDIKSGSKQVSAPVYSHLTYDIVPNEQKFIKQPDILILEGLNVLQSGMDYPHDPHHVFVSDFVDFSIYVDAPEKLLKSWYISRFLKFRQGAFSDPDSYFHSYSKLSEEEAINTASDIWQEINGLNLRQNILPTRERASLIMTKGTNHTIESVRLRK.

Position 95–102 (95–102 (GSVAVGKS)) interacts with ATP.

It belongs to the prokaryotic pantothenate kinase family.

Its subcellular location is the cytoplasm. It carries out the reaction (R)-pantothenate + ATP = (R)-4'-phosphopantothenate + ADP + H(+). It functions in the pathway cofactor biosynthesis; coenzyme A biosynthesis; CoA from (R)-pantothenate: step 1/5. This chain is Pantothenate kinase, found in Photorhabdus laumondii subsp. laumondii (strain DSM 15139 / CIP 105565 / TT01) (Photorhabdus luminescens subsp. laumondii).